The chain runs to 439 residues: Tol-Pal system protein TolB (439 aa).

The N-terminal stretch at 1–22 (MTKFPRWLAMLVGLLFPLSALT) is a signal peptide.

Belongs to the TolB family. In terms of assembly, the Tol-Pal system is composed of five core proteins: the inner membrane proteins TolA, TolQ and TolR, the periplasmic protein TolB and the outer membrane protein Pal. They form a network linking the inner and outer membranes and the peptidoglycan layer.

It is found in the periplasm. Its function is as follows. Part of the Tol-Pal system, which plays a role in outer membrane invagination during cell division and is important for maintaining outer membrane integrity. The chain is Tol-Pal system protein TolB from Xylella fastidiosa (strain 9a5c).